Here is a 443-residue protein sequence, read N- to C-terminus: Probable D-serine dehydratase (443 aa).

Lys-116 carries the post-translational modification N6-(pyridoxal phosphate)lysine.

Belongs to the serine/threonine dehydratase family. DsdA subfamily. Requires pyridoxal 5'-phosphate as cofactor.

The enzyme catalyses D-serine = pyruvate + NH4(+). This is Probable D-serine dehydratase from Bacillus cereus (strain G9842).